The following is a 53-amino-acid chain: Sec-independent protein translocase protein TatA (53 aa).

Residues 1 to 21 traverse the membrane as a helical segment; the sequence is MGMSFSHLLIVLLIIFVLFGA.

The protein belongs to the TatA/E family. In terms of assembly, the Tat system comprises two distinct complexes: a TatABC complex, containing multiple copies of TatA, TatB and TatC subunits, and a separate TatA complex, containing only TatA subunits. Substrates initially bind to the TatABC complex, which probably triggers association of the separate TatA complex to form the active translocon.

It is found in the cell inner membrane. Its function is as follows. Part of the twin-arginine translocation (Tat) system that transports large folded proteins containing a characteristic twin-arginine motif in their signal peptide across membranes. TatA could form the protein-conducting channel of the Tat system. The polypeptide is Sec-independent protein translocase protein TatA (Rickettsia africae (strain ESF-5)).